Reading from the N-terminus, the 249-residue chain is MEFARGQNLRKRTFSDMNISYKNIGIHPNSLPKNNLSRKILFKGKISKNSIPKDSLTNGKSSKNCMSKNDLAKDNSPKKGLIGKKRSAPLDISFQSMNSSMSSSTQKKTRILDEKNKDQSSSNENDRDSPVIVDITLKPSYTSKISRITEIIHKMKELNINRIEDGLSFNKKRNEHDAKNILLHTMEMVEEDCEEEEDVIIENPYLNASLSEDDTDSIVGTDYSEEEKESISETESSSDGECYSLYDSF.

Over residues 51–67 (IPKDSLTNGKSSKNCMS) the composition is skewed to polar residues. Disordered stretches follow at residues 51-131 (IPKD…DSPV) and 205-240 (YLNA…SSDG). Residues 93–106 (SFQSMNSSMSSSTQ) show a composition bias toward low complexity. Residues 110–129 (RILDEKNKDQSSSNENDRDS) show a composition bias toward basic and acidic residues.

This sequence belongs to the asfivirus DP238L family.

This is an uncharacterized protein from African swine fever virus (isolate Tick/Malawi/Lil 20-1/1983) (ASFV).